Reading from the N-terminus, the 304-residue chain is Oxidoreductase calM (304 aa).

I26, T45, D68, and N98 together coordinate NADP(+). The active-site Proton donor is the S152. NADP(+)-binding residues include Y166, K170, V200, and T202. The active-site Proton acceptor is the Y166. K170 serves as the catalytic Lowers pKa of active site Tyr.

The protein belongs to the short-chain dehydrogenases/reductases (SDR) family.

It functions in the pathway secondary metabolite biosynthesis. Functionally, oxidoreductase; part of the gene cluster that mediates the biosynthesis of calbistrin A and related compounds. Calbistrin A is a secondary metabolite with an interesting structure that was recently found to have bioactivity against leukemia cells. It consists of two polyketides linked by an ester bond: a bicyclic decalin containing polyketide and a linear 12 carbon dioic acid structure. The polyketide synthase calA is probably responsible for forming the decalin moiety. Because calA lacks a designated enoylreductase (ER) domain, the required activity is provided by the trans-enoyl reductase calK. Following release from the PKS, calF then probably catalyzes the oxidation and the subsequent Diels Alder cycloisomerization that lead to the formation of the decalin moiety. The decalin polyketide backbone includes two C-methyl groups, at C7 and C11 in backbone, of which the C7 position is probably methylated by the methyltransferase domain of calA. A candidate for adding the methyl group at C11, if not done by CalA, is the cluster methyltransferase calH. Several additional tailoring enzymes within the cluster could be involved in the modification of the decalin polyketide product. Those include the 3 cytochrome P450 monooxygenases CalE, CalG and CalL, of which one might be responsible for the introduction of the extra hydroxyl group attached to the backbone of the decalin moiety, at position C9 in the backbone, that allows for attachment of the linear moiety. One tailoring enzyme activity that is expected to be involved in biosynthesis of calbistrin is an acyltransferase for connecting the two polyketide synthase products, and which could be performed by the cluster acyltransferase calJ. The enzyme responsible for the biosynthesis of the linear moiety, probably a second PKS, has not been identified yet. In Penicillium decumbens, this protein is Oxidoreductase calM.